The chain runs to 319 residues: DNA-directed RNA polymerases IV and V subunit 3B (319 aa).

M1 carries the N-acetylmethionine modification.

Belongs to the archaeal Rpo3/eukaryotic RPB3 RNA polymerase subunit family. Component of the RNA polymerase IV and V complexes. Interacts with NRPB11, SHH1, GRP23 and NRPD1.

It is found in the nucleus. Its function is as follows. DNA-dependent RNA polymerase catalyzes the transcription of DNA into RNA using the four ribonucleoside triphosphates as substrates. Component of RNA polymerases IV and V which mediate short-interfering RNAs (siRNA) accumulation and subsequent RNA-directed DNA methylation-dependent (RdDM) transcriptional gene silencing (TGS) of endogenous repeated sequences, including transposable elements. The polypeptide is DNA-directed RNA polymerases IV and V subunit 3B (NRPD3B) (Arabidopsis thaliana (Mouse-ear cress)).